The primary structure comprises 366 residues: Beta sliding clamp (366 aa).

This sequence belongs to the beta sliding clamp family. In terms of assembly, forms a ring-shaped head-to-tail homodimer around DNA which binds and tethers DNA polymerases and other proteins to the DNA. The DNA replisome complex has a single clamp-loading complex (3 tau and 1 each of delta, delta', psi and chi subunits) which binds 3 Pol III cores (1 core on the leading strand and 2 on the lagging strand) each with a beta sliding clamp dimer. Additional proteins in the replisome are other copies of gamma, psi and chi, Ssb, DNA helicase and RNA primase.

Its subcellular location is the cytoplasm. Its function is as follows. Confers DNA tethering and processivity to DNA polymerases and other proteins. Acts as a clamp, forming a ring around DNA (a reaction catalyzed by the clamp-loading complex) which diffuses in an ATP-independent manner freely and bidirectionally along dsDNA. Initially characterized for its ability to contact the catalytic subunit of DNA polymerase III (Pol III), a complex, multichain enzyme responsible for most of the replicative synthesis in bacteria; Pol III exhibits 3'-5' exonuclease proofreading activity. The beta chain is required for initiation of replication as well as for processivity of DNA replication. This is Beta sliding clamp (dnaN) from Buchnera aphidicola subsp. Rhopalosiphum padi.